Consider the following 181-residue polypeptide: RING-H2 finger protein ATL72 (181 aa).

A helical transmembrane segment spans residues V34–L54. Residues C114–R156 form an RING-type; atypical zinc finger.

It belongs to the RING-type zinc finger family. ATL subfamily.

It is found in the membrane. The catalysed reaction is S-ubiquitinyl-[E2 ubiquitin-conjugating enzyme]-L-cysteine + [acceptor protein]-L-lysine = [E2 ubiquitin-conjugating enzyme]-L-cysteine + N(6)-ubiquitinyl-[acceptor protein]-L-lysine.. Its pathway is protein modification; protein ubiquitination. This is RING-H2 finger protein ATL72 (ATL72) from Arabidopsis thaliana (Mouse-ear cress).